Reading from the N-terminus, the 322-residue chain is Malate dehydrogenase (322 aa).

NAD(+) contacts are provided by residues 10-15 (GSGQIG) and Asp34. Residues Arg83 and Arg89 each contribute to the substrate site. NAD(+)-binding positions include Asn96 and 119-121 (ITN). 2 residues coordinate substrate: Asn121 and Arg152. His176 acts as the Proton acceptor in catalysis.

It belongs to the LDH/MDH superfamily. MDH type 3 family.

The enzyme catalyses (S)-malate + NAD(+) = oxaloacetate + NADH + H(+). In terms of biological role, catalyzes the reversible oxidation of malate to oxaloacetate. This Nitrobacter winogradskyi (strain ATCC 25391 / DSM 10237 / CIP 104748 / NCIMB 11846 / Nb-255) protein is Malate dehydrogenase.